The primary structure comprises 452 residues: Gastrin/cholecystokinin type B receptor (452 aa).

Residues 1–21 (MELLKLNRSVQGPGPGSGSSL) are disordered. Topologically, residues 1–57 (MELLKLNRSVQGPGPGSGSSLCRPGVSLLNSSSAGNLSCDPPRIRGTGTRELEMAIR) are extracellular. N-linked (GlcNAc...) asparagine glycosylation is found at Asn-7, Asn-30, and Asn-36. Residues 58-79 (ITLYAVIFLMSVGGNVLIIVVL) form a helical membrane-spanning segment. Residues 80-87 (GLSRRLRT) lie on the Cytoplasmic side of the membrane. A helical membrane pass occupies residues 88–109 (VTNAFLLSLAVSDLLLAVACMP). The Extracellular segment spans residues 110 to 131 (FTLLPNLMGTFIFGTVICKAIS). Cys-127 and Cys-205 are joined by a disulfide. A helical membrane pass occupies residues 132-150 (YLMGVSVSVSTLNLVAIAL). Topologically, residues 151 to 170 (ERYSAICRPLQARVWQTRSH) are cytoplasmic. The chain crosses the membrane as a helical span at residues 171-189 (AARVILATWLLSGLLMVPY). Topologically, residues 190–219 (PVYTMVQPVGPRVLQCMHRWPSARVQQTWS) are extracellular. Residues 220–242 (VLLLLLLFFIPGVVIAVAYGLIS) form a helical membrane-spanning segment. Topologically, residues 243–338 (RELYLGLHFD…KLLAKKRVVR (96 aa)) are cytoplasmic. Positions 257 to 286 (SETQSRARNQGGLPGGAAPGPVHQNGGCRP) are disordered. The helical transmembrane segment at 339–360 (MLLVIVLLFFLCWLPVYSVNTW) threads the bilayer. At 361–378 (RAFDGPGAQRALSGAPIS) the chain is on the extracellular side. Residues 379 to 399 (FIHLLSYVSACVNPLVYCFMH) form a helical membrane-spanning segment. At 400-452 (RRFRQACLDTCARCCPRPPRARPQPLPDEDPPTPSIASLSRLSYTTISTLGPG) the chain is on the cytoplasmic side. Cys-413 is lipidated: S-palmitoyl cysteine. A disordered region spans residues 421 to 452 (RPQPLPDEDPPTPSIASLSRLSYTTISTLGPG). Over residues 434-452 (SIASLSRLSYTTISTLGPG) the composition is skewed to polar residues.

It belongs to the G-protein coupled receptor 1 family. As to expression, parietal cells, pancreas, brain and various neoplastic tissues.

It is found in the cell membrane. Its function is as follows. Receptor for gastrin and cholecystokinin. The CCK-B receptors occur throughout the central nervous system where they modulate anxiety, analgesia, arousal, and neuroleptic activity. This receptor mediates its action by association with G proteins that activate a phosphatidylinositol-calcium second messenger system. The protein is Gastrin/cholecystokinin type B receptor (Cckbr) of Rattus norvegicus (Rat).